The sequence spans 73 residues: uncharacterized protein (73 aa).

This is an uncharacterized protein from Schizosaccharomyces pombe (strain 972 / ATCC 24843) (Fission yeast).